The following is a 282-amino-acid chain: Keratin-associated protein 10-1 (282 aa).

24 repeat units span residues 26–30, 31–35, 36–40, 57–61, 79–83, 89–93, 99–103, 104–108, 109–113, 121–125, 131–135, 141–145, 146–150, 163–167, 173–177, 183–187, 193–197, 198–202, 210–214, 220–224, 225–229, 244–248, 251–255, and 262–266. The 24 X 5 AA repeats of C-C-X(3) stretch occupies residues 26–266; sequence CCEPHCCALS…SCQASCCRPA (241 aa).

Belongs to the KRTAP type 10 family. Interacts with hair keratins. As to expression, restricted to a narrow region of the hair fiber cuticle, lying approximately 20 cell layers above the apex of the dermal papilla of the hair root; not detected in any other tissues.

Its function is as follows. In the hair cortex, hair keratin intermediate filaments are embedded in an interfilamentous matrix, consisting of hair keratin-associated proteins (KRTAP), which are essential for the formation of a rigid and resistant hair shaft through their extensive disulfide bond cross-linking with abundant cysteine residues of hair keratins. The matrix proteins include the high-sulfur and high-glycine-tyrosine keratins. The chain is Keratin-associated protein 10-1 (KRTAP10-1) from Homo sapiens (Human).